The following is a 6885-amino-acid chain: Nesprin-2 (6885 aa).

Positions methionine 1 to lysine 286 are actin-binding. Residues methionine 1–arginine 6834 are Cytoplasmic-facing. Calponin-homology (CH) domains lie at aspartate 31–histidine 136 and methionine 181–lysine 286. Spectrin repeat units follow at residues glycine 297–asparagine 378, alanine 379–asparagine 472, isoleucine 473–tyrosine 575, asparagine 576–glutamine 680, valine 735–threonine 838, aspartate 839–glutamate 932, and leucine 933–serine 1034. Positions glycine 297 to glutamate 6782 form a coiled coil. Serine 841 is modified (phosphoserine). Lysine 955 bears the N6-acetyllysine mark. A compositionally biased stretch (polar residues) spans proline 1042 to asparagine 1059. The segment at proline 1042–glutamate 1084 is disordered. Spectrin repeat units lie at residues threonine 1121 to threonine 1212, asparagine 1263 to lysine 1323, alanine 1324 to glutamine 1419, glutamate 1420 to threonine 1524, glutamate 1525 to aspartate 1636, tyrosine 1637 to serine 1738, asparagine 1739 to serine 1830, valine 1831 to leucine 1938, glutamate 1939 to aspartate 2036, lysine 2037 to threonine 2132, tyrosine 2133 to asparagine 2243, and leucine 2244 to isoleucine 2360. Positions glutamate 2368–alanine 2382 are enriched in basic and acidic residues. The disordered stretch occupies residues glutamate 2368–alanine 2394. The span at threonine 2383–serine 2393 shows a compositional bias: polar residues. Spectrin repeat units follow at residues aspartate 2432–lysine 2513, asparagine 2514–glutamine 2620, glutamine 2621–glutamate 2717, proline 2718–phenylalanine 2831, lysine 2832–asparagine 2933, threonine 2934–lysine 3036, glutamine 3037–leucine 3142, glutamate 3143–threonine 3248, asparagine 3249–threonine 3352, glutamate 3353–glutamate 3465, glutamate 3466–lysine 3573, asparagine 3574–valine 3679, leucine 3680–threonine 3777, serine 3778–glutamate 3880, serine 3881–glutamate 3986, and glutamine 3987–valine 4086. Serine 2781 carries the phosphoserine modification. Composition is skewed to basic and acidic residues over residues glutamine 4073–leucine 4083 and valine 4093–lysine 4102. 4 disordered regions span residues glutamine 4073–isoleucine 4162, aspartate 4184–proline 4232, glutamate 4335–leucine 4363, and histidine 4416–asparagine 4448. Serine 4108 carries the post-translational modification Phosphoserine. Basic and acidic residues-rich tracts occupy residues serine 4122–glutamate 4134 and tryptophan 4144–alanine 4155. The Spectrin 36 repeat unit spans residues lysine 4229–lysine 4348. Residues glutamate 4335–glutamate 4356 are compositionally biased toward basic and acidic residues. Residues threonine 4421 to glutamate 4434 are compositionally biased toward polar residues. Spectrin repeat units lie at residues asparagine 4520–glutamine 4639, asparagine 4640–tyrosine 4727, threonine 4728–leucine 4837, glutamine 4838–leucine 4943, lysine 4944–leucine 5051, histidine 5052–histidine 5164, leucine 5165–asparagine 5266, glutamine 5267–serine 5391, asparagine 5392–valine 5487, lysine 5488–leucine 5589, glutamine 5590–aspartate 5704, phenylalanine 5705–alanine 5799, glutamate 5800–isoleucine 5907, arginine 5908–leucine 6017, lysine 6018–tryptophan 6135, arginine 6136–phenylalanine 6243, and threonine 6244–glutamate 6355. Serine 5785 is modified (phosphoserine). Acidic residues predominate over residues leucine 6354–methionine 6367. The tract at residues leucine 6354 to arginine 6508 is disordered. Serine 6361, serine 6384, serine 6411, serine 6428, serine 6429, serine 6430, and serine 6459 each carry phosphoserine. Positions glutamate 6368–serine 6384 are enriched in basic and acidic residues. 3 Spectrin repeats span residues serine 6461 to isoleucine 6549, lysine 6550 to aspartate 6665, and phenylalanine 6666 to glutamate 6782. Basic and acidic residues predominate over residues proline 6463 to arginine 6474. The span at proline 6477 to proline 6489 shows a compositional bias: pro residues. The segment covering proline 6490–glycine 6499 has biased composition (low complexity). Positions glycine 6769–proline 6824 are disordered. The region spanning arginine 6826–threonine 6885 is the KASH domain. Residues alanine 6835–serine 6855 traverse the membrane as a helical; Anchor for type IV membrane protein segment. Over serine 6856–threonine 6885 the chain is Perinuclear space. Positions phenylalanine 6872–threonine 6885 are sufficient for interaction with SUN2.

Belongs to the nesprin family. In terms of assembly, core component of LINC complexes which are composed of inner nuclear membrane SUN domain-containing proteins coupled to outer nuclear membrane KASH domain-containing nesprins. SUN and KASH domain-containing proteins seem to bind each other promiscuously; however, some LINC complex constituents are tissue- or cell type-specific. At least SUN1/2-containing core LINC complexes are proposed to be hexameric composed of three protomers of each KASH and SUN domain-containing protein. The SUN2:SYNE2/KASH2 complex is a heterohexamer; the homotrimeric cloverleave-like conformation of the SUN domain is a prerequisite for LINC complex formation in which three separate SYNE2/KASH2 peptides bind at the interface of adjacent SUN domains. Interacts with EMD, LMNA, MKS3 and F-actin via its N-terminal domain. Interacts with DCTN1 and DYNC1I1/2; suggesting the association with the dynein-dynactin motor complex. Associates with kinesin motor complexes. Interacts with TMEM67. Interacts (via KASH domain) with TMEM258. Interacts with BROX; this interaction promotes SYN2 ubiquitination and facilitates the relaxation of mechanical stress imposed by compressive actin fibers at the rupture site. In terms of processing, the disulfid bond with SUN2 is required for stability of the SUN2:SYNE2/KASH2 LINC complex under tensile forces though not required for the interaction. Post-translationally, ubiquitinated, targeting it for degradation. As to expression, widely expressed, with higher level in kidney, adult and fetal liver, stomach and placenta. Weakly expressed in skeletal muscle and brain. Isoform 5 is highly expressed in pancreas, skeletal muscle and heart.

The protein localises to the nucleus outer membrane. The protein resides in the sarcoplasmic reticulum membrane. It localises to the cell membrane. Its subcellular location is the cytoplasm. It is found in the cytoskeleton. The protein localises to the mitochondrion. The protein resides in the nucleus. It localises to the nucleoplasm. Its subcellular location is the myofibril. It is found in the sarcomere. The protein localises to the z line. The protein resides in the cell junction. It localises to the focal adhesion. Its function is as follows. Multi-isomeric modular protein which forms a linking network between organelles and the actin cytoskeleton to maintain the subcellular spatial organization. As a component of the LINC (LInker of Nucleoskeleton and Cytoskeleton) complex involved in the connection between the nuclear lamina and the cytoskeleton. The nucleocytoplasmic interactions established by the LINC complex play an important role in the transmission of mechanical forces across the nuclear envelope and in nuclear movement and positioning. Specifically, SYNE2 and SUN2 assemble in arrays of transmembrane actin-associated nuclear (TAN) lines which are bound to F-actin cables and couple the nucleus to retrograde actin flow during actin-dependent nuclear movement. May be involved in nucleus-centrosome attachment. During interkinetic nuclear migration (INM) at G2 phase and nuclear migration in neural progenitors its LINC complex association with SUN1/2 and probable association with cytoplasmic dynein-dynactin motor complexes functions to pull the nucleus toward the centrosome; SYNE1 and SYNE2 may act redundantly. During INM at G1 phase mediates respective LINC complex association with kinesin to push the nucleus away from the centrosome. Involved in nuclear migration in retinal photoreceptor progenitors. Required for centrosome migration to the apical cell surface during early ciliogenesis. Facilitates the relaxation of mechanical stress imposed by compressive actin fibers at the rupture site through its nteraction with SYN2. The protein is Nesprin-2 of Homo sapiens (Human).